A 429-amino-acid polypeptide reads, in one-letter code: Enolase (429 aa).

Gln168 provides a ligand contact to (2R)-2-phosphoglycerate. Catalysis depends on Glu210, which acts as the Proton donor. Mg(2+) contacts are provided by Asp247, Glu288, and Asp315. Lys340, Arg369, Ser370, and Lys391 together coordinate (2R)-2-phosphoglycerate. The Proton acceptor role is filled by Lys340.

The protein belongs to the enolase family. Requires Mg(2+) as cofactor.

The protein localises to the cytoplasm. The protein resides in the secreted. It localises to the cell surface. It carries out the reaction (2R)-2-phosphoglycerate = phosphoenolpyruvate + H2O. It functions in the pathway carbohydrate degradation; glycolysis; pyruvate from D-glyceraldehyde 3-phosphate: step 4/5. Functionally, catalyzes the reversible conversion of 2-phosphoglycerate (2-PG) into phosphoenolpyruvate (PEP). It is essential for the degradation of carbohydrates via glycolysis. This chain is Enolase, found in Nostoc sp. (strain PCC 7120 / SAG 25.82 / UTEX 2576).